The chain runs to 305 residues: Mycothiol acetyltransferase (305 aa).

2 consecutive N-acetyltransferase domains span residues 10–154 (DRLD…VVLE) and 156–305 (ISLR…YARA). Glu-38 provides a ligand contact to 1D-myo-inositol 2-(L-cysteinylamino)-2-deoxy-alpha-D-glucopyranoside. 82 to 84 (LAV) contributes to the acetyl-CoA binding site. 3 residues coordinate 1D-myo-inositol 2-(L-cysteinylamino)-2-deoxy-alpha-D-glucopyranoside: Glu-183, Lys-225, and Glu-238. Acetyl-CoA contacts are provided by residues 242–244 (VAI) and 249–255 (QGRGLGR). Tyr-276 serves as a coordination point for 1D-myo-inositol 2-(L-cysteinylamino)-2-deoxy-alpha-D-glucopyranoside. An acetyl-CoA-binding site is contributed by 281 to 286 (NASALH).

It belongs to the acetyltransferase family. MshD subfamily. As to quaternary structure, monomer.

The enzyme catalyses 1D-myo-inositol 2-(L-cysteinylamino)-2-deoxy-alpha-D-glucopyranoside + acetyl-CoA = mycothiol + CoA + H(+). Its function is as follows. Catalyzes the transfer of acetyl from acetyl-CoA to desacetylmycothiol (Cys-GlcN-Ins) to form mycothiol. The protein is Mycothiol acetyltransferase of Rhodococcus opacus (strain B4).